Here is a 214-residue protein sequence, read N- to C-terminus: Glycerol-3-phosphate acyltransferase (214 aa).

Helical transmembrane passes span 4 to 24 (LIVA…IVSA), 52 to 72 (AAIL…WFVV), 82 to 102 (DTSV…PAFF), 118 to 138 (LAIN…VAFF), and 159 to 179 (FLFG…LLVW).

This sequence belongs to the PlsY family. Probably interacts with PlsX.

Its subcellular location is the cell inner membrane. It carries out the reaction an acyl phosphate + sn-glycerol 3-phosphate = a 1-acyl-sn-glycero-3-phosphate + phosphate. Its pathway is lipid metabolism; phospholipid metabolism. Its function is as follows. Catalyzes the transfer of an acyl group from acyl-phosphate (acyl-PO(4)) to glycerol-3-phosphate (G3P) to form lysophosphatidic acid (LPA). This enzyme utilizes acyl-phosphate as fatty acyl donor, but not acyl-CoA or acyl-ACP. In Paraburkholderia xenovorans (strain LB400), this protein is Glycerol-3-phosphate acyltransferase.